A 268-amino-acid polypeptide reads, in one-letter code: Thiazole synthase (268 aa).

Lys-96 (schiff-base intermediate with DXP) is an active-site residue. 1-deoxy-D-xylulose 5-phosphate is bound by residues Gly-157, 185 to 186 (AG), and 207 to 208 (NT). A disordered region spans residues 238–268 (PMRPREAASPSSPVEGVPFTPTGPRPGRGPQ). The span at 258 to 268 (PTGPRPGRGPQ) shows a compositional bias: pro residues.

Belongs to the ThiG family. Homotetramer. Forms heterodimers with either ThiH or ThiS.

Its subcellular location is the cytoplasm. The catalysed reaction is [ThiS sulfur-carrier protein]-C-terminal-Gly-aminoethanethioate + 2-iminoacetate + 1-deoxy-D-xylulose 5-phosphate = [ThiS sulfur-carrier protein]-C-terminal Gly-Gly + 2-[(2R,5Z)-2-carboxy-4-methylthiazol-5(2H)-ylidene]ethyl phosphate + 2 H2O + H(+). The protein operates within cofactor biosynthesis; thiamine diphosphate biosynthesis. In terms of biological role, catalyzes the rearrangement of 1-deoxy-D-xylulose 5-phosphate (DXP) to produce the thiazole phosphate moiety of thiamine. Sulfur is provided by the thiocarboxylate moiety of the carrier protein ThiS. In vitro, sulfur can be provided by H(2)S. This chain is Thiazole synthase, found in Thermus thermophilus (strain ATCC BAA-163 / DSM 7039 / HB27).